A 506-amino-acid chain; its full sequence is Cytochrome P450 monooxygenase BOA3 (506 aa).

A helical transmembrane segment spans residues 15 to 35 (IYLWIGFVLVVLLAYPTYFAI). Cys-451 contacts heme.

The protein belongs to the cytochrome P450 family. Heme serves as cofactor.

The protein localises to the membrane. The protein operates within polyketide biosynthesis. Cytochrome P450 monooxygenase; part of the gene cluster A that mediates the biosynthesis of botcinic acid and its botcinin derivatives, acetate-derived polyketides that contribute to virulence when combined with the sesquiterpene botrydial. Botcinic acid and its derivatives have been shown to induce chlorosis and necrosis during host plant infection, but also have antifungal activities. Two polyketide synthases, BOA6 and BOA9, are involved in the biosynthesis of botcinins. BOA6 mediates the formation of the per-methylated tetraketide core by condensation of four units of malonyl-CoA with one unit of acetyl-CoA, which would be methylated in activated methylene groups to yield a bicyclic acid intermediate that could then either be converted to botrylactone derivatives or lose the starter acetate unit through a retro-Claisen type C-C bond cleavage to yield botcinin derivatives. The second polyketide synthase, BOA9, is probably required for the biosynthesis of the tetraketide side chain of botcinins. The methyltransferase (MT) domain within BOA6 is probably responsible for the incorporation of four methyl groups. The trans-enoyl reductase BOA5 might take over the enoyl reductase function of BOA6 that misses an ER domain. The monooxygenases BOA2, BOA3 and BOA4 might be involved in further hydroxylations at C4, C5 and C8, whereas BOA7, close to BOA9, could potentially be involved in the hydroxylation at C4 in the side chain of botcinins. The chain is Cytochrome P450 monooxygenase BOA3 from Botryotinia fuckeliana (strain B05.10) (Noble rot fungus).